Consider the following 102-residue polypeptide: Biotrophy-associated secreted protein 4 (102 aa).

A signal peptide spans 1-21; sequence MQLSFSAIAILLAFAVNHATA. N-linked (GlcNAc...) asparagine glycosylation is present at asparagine 36.

The protein resides in the secreted. Secreted effector involved in biotrophic colonization of plant cells. Participates in transition from the biotrophic to the necrotrophic phase of Magnaporthe oryzae. Elicits rice basic defense responses during the early stage of interaction and promotes cell death in the late stage of compatible interaction. The polypeptide is Biotrophy-associated secreted protein 4 (Pyricularia oryzae (strain 70-15 / ATCC MYA-4617 / FGSC 8958) (Rice blast fungus)).